The sequence spans 22 residues: Proline-rich peptide (22 aa).

The tract at residues 1–22 is disordered; sequence FVDRNRIPRSNNGPKIPIISNP.

It is found in the secreted. Antibacterial peptide active against Gram-positive bacterium M.luteus and Gram-negative bacterium E.coli. The sequence is that of Proline-rich peptide from Calliphora vicina (Blue blowfly).